Reading from the N-terminus, the 134-residue chain is Replication enhancer protein (134 aa).

The protein belongs to the geminiviridae replication enhancer protein family. Homooligomer. Interacts with the replication-associated protein (REP). Interacts with host proliferating cell nuclear antigen (PCNA). Interacts with host retinoblastoma-related protein 1 (RBR1), and may thereby deregulate the host cell cycle. Oligomerization and interaction with PCNA are necessary for optimal replication enhancement.

Increases viral DNA accumulation. Enhances infectivity and symptom expression. This is Replication enhancer protein from Tomato yellow leaf curl Sardinia virus (TYLCSV).